We begin with the raw amino-acid sequence, 159 residues long: Small ribosomal subunit protein uS7 (159 aa).

This sequence belongs to the universal ribosomal protein uS7 family. As to quaternary structure, part of the 30S ribosomal subunit. Contacts proteins S9 and S11.

In terms of biological role, one of the primary rRNA binding proteins, it binds directly to 16S rRNA where it nucleates assembly of the head domain of the 30S subunit. Is located at the subunit interface close to the decoding center, probably blocks exit of the E-site tRNA. The protein is Small ribosomal subunit protein uS7 of Sulfurihydrogenibium sp. (strain YO3AOP1).